Consider the following 238-residue polypeptide: E3 ubiquitin-protein ligase ZNRF2 (238 aa).

Positions 1–137 (MGAKQSGPAA…AGGGPGGPRL (137 aa)) are disordered. Glycine 2 carries N-myristoyl glycine lipidation. 9 positions are modified to phosphoserine: serine 20, serine 24, serine 75, serine 82, serine 107, serine 110, serine 141, serine 147, and serine 189. A compositionally biased stretch (low complexity) spans 35 to 77 (GARAARFAAPVSGAQQPSASAGAAAAAAAAASAPAAPRSRSLG). An RING-type; atypical zinc finger spans residues 195–236 (CAICLEELQQGDTIARLPCLCIYHKGCIDEWFEVNRSCPEHP).

Interacts with UBE2N. Interacts with ZNRF1. Interacts (when phosphorylated) with YWHAE. In terms of processing, phosphorylated; leading to binding to YWHAE. Phosphorylated by MTOR at Ser-147 and dephosphorylated by PP6C. Ser-147 phosphorylation stimulates vesicle-to-cytosol translocation. Expressed primarily in the nervous system. Expression is more intense in the granular cell layer of hippocampus, Purkinje cell layer of the cerebellum and the granular cell layer of the olfactory bulb. Detected in sensory neurons but not expressed in sympatic or enteric neurons. Expressed in testis, adipose tissue, columnar epithelial cells of the gut.

The protein resides in the endosome membrane. The protein localises to the lysosome membrane. It is found in the presynaptic cell membrane. It localises to the cytoplasm. The catalysed reaction is S-ubiquitinyl-[E2 ubiquitin-conjugating enzyme]-L-cysteine + [acceptor protein]-L-lysine = [E2 ubiquitin-conjugating enzyme]-L-cysteine + N(6)-ubiquitinyl-[acceptor protein]-L-lysine.. The protein operates within protein modification; protein ubiquitination. In terms of biological role, E3 ubiquitin-protein ligase that plays a role in the establishment and maintenance of neuronal transmission and plasticity. Ubiquitinates the Na(+)/K(+) ATPase alpha-1 subunit/ATP1A1 and thereby influences its endocytosis and/or degradation. Also acts as a positive regulator of mTORC1 activation by amino acids, which functions upstream of the V-ATPase and of Rag-GTPases. In turn, phosphorylation by mTOR leads to its inhibition via targeting to the cytosol allowing a self-regulating feedback mechanism. The polypeptide is E3 ubiquitin-protein ligase ZNRF2 (Znrf2) (Mus musculus (Mouse)).